A 316-amino-acid polypeptide reads, in one-letter code: tRNA dimethylallyltransferase (316 aa).

17 to 24 (GPTASGKT) is an ATP binding site. Residue 19 to 24 (TASGKT) coordinates substrate. 4 interaction with substrate tRNA regions span residues 42-45 (DSAL), 166-170 (QRLSR), 247-252 (RCVGYR), and 280-287 (KRQITWLR).

This sequence belongs to the IPP transferase family. As to quaternary structure, monomer. The cofactor is Mg(2+).

It carries out the reaction adenosine(37) in tRNA + dimethylallyl diphosphate = N(6)-dimethylallyladenosine(37) in tRNA + diphosphate. Its function is as follows. Catalyzes the transfer of a dimethylallyl group onto the adenine at position 37 in tRNAs that read codons beginning with uridine, leading to the formation of N6-(dimethylallyl)adenosine (i(6)A). The sequence is that of tRNA dimethylallyltransferase from Escherichia fergusonii (strain ATCC 35469 / DSM 13698 / CCUG 18766 / IAM 14443 / JCM 21226 / LMG 7866 / NBRC 102419 / NCTC 12128 / CDC 0568-73).